A 934-amino-acid chain; its full sequence is MSSDEKGISPAHKTSTPTHRSASSSTSSQRDSRQSIHILERTASSSTEPSVSRQLLEPEPVPLSKEADSWEIIEGLKIGQTNVQKPDKHEGFMLKKRKWPLKGWHKRFFVLDNGMLKYSKAPLDIQKGKVHGSIDVGLSVMSIKKKARRIDLDTEEHIYHLKVKSQDWFDAWVSKLRHHRLYRQNEIVRSPRDASFHIFPSTSTAESSPAANVSVMDGKMQPNSFPWQSPLPCSNSLPATCTTGQSKVAAWLQDSEEMDRCAEDLAHCQSNLVELSKLLQNLEILQRTQSAPNFTDMQANCVDISKKDKRVTRRWRTKSVSKDTKIQLQVPFSATMSPVRLHSSNPNLCADIEFQTPPSHLTDPLESSTDYTKLQEEFCLIAQKVHSLLKSAFNSIAIEKEKLKQMVSEQDHSKGHSTQMARLRQSLSQALNQNAELRSRLNRIHSESIICDQVVSVNIIPSPDEAGEQIHVSLPLSQQVANESRLSMSESVSEFFDAQEVLLSASSSENEASDDESYISDVSDNISEDNTSVADNISRQILNGELTGGAFRNGRRACLPAPCPDTSNINLWNILRNNIGKDLSKVSMPVELNEPLNTLQHLCEEMEYSELLDKASETDDPYERMVLVAAFAVSGYCSTYFRAGSKPFNPVLGETYECIREDKGFRFFSEQVSHHPPISACHCESKNFVFWQDIRWKNKFWGKSMEILPVGTLNVMLPKYGDYYVWNKVTTCIHNILSGRRWIEHYGEVTIRNTKSSVCICKLTFVKVNYWNSNMNEVQGVVIDQEGKAVYRLFGKWHEGLYCGVAPSAKCIWRPGSMPTNYELYYGFTRFAIELNELDPVLKDLLPPTDARFRPDQRFLEEGNLEAAASEKQRVEELQRSRRRYMEENNLEHIPKFFKKVIDANQREAWVSNDTYWELRKDPGFSKVDSPVLW.

The disordered stretch occupies residues 1 to 62 (MSSDEKGISP…RQLLEPEPVP (62 aa)). At serine 2 the chain carries N-acetylserine. Residues 14-29 (TSTPTHRSASSSTSSQ) show a composition bias toward low complexity. Residues 30–40 (RDSRQSIHILE) show a composition bias toward basic and acidic residues. The residue at position 35 (serine 35) is a Phosphoserine. Polar residues predominate over residues 42–53 (TASSSTEPSVSR). Residues 86–181 (PDKHEGFMLK…WVSKLRHHRL (96 aa)) enclose the PH domain. Phosphoserine occurs at positions 190 and 290.

This sequence belongs to the OSBP family. In terms of assembly, homodimer. Interacts with OSBPL3. In terms of tissue distribution, expressed in brain and striated muscle (at protein level). Widely expressed. Expressed in skeletal muscle.

It localises to the cytoplasm. It is found in the cytosol. The protein localises to the endoplasmic reticulum membrane. Its subcellular location is the nucleus envelope. The protein resides in the cell membrane. It localises to the endosome membrane. Functionally, regulates cellular transport and efflux of cholesterol. Plays a role in phosphatidylinositol-4-phophate (PI4P) turnover at the neuronal membrane. Binds via its PH domain PI4P, phosphatidylinositol-4,5-diphosphate, phosphatidylinositol-3,4,5-triphosphate, and phosphatidic acid. Weakly binds 25-hydroxycholesterol. This is Oxysterol-binding protein-related protein 6 (OSBPL6) from Homo sapiens (Human).